We begin with the raw amino-acid sequence, 61 residues long: Calprismin (61 aa).

In terms of processing, glycosylated. In terms of tissue distribution, expressed by the calcifying mantle epithelium and incorporated into the shell's calcitic prismatic layer.

The chain is Calprismin from Pinna nobilis (Noble pen shell).